A 465-amino-acid chain; its full sequence is GTPase Der (465 aa).

EngA-type G domains follow at residues 3–167 (PLVA…PEEG) and 179–352 (VRIA…ASAT). Residues 9 to 16 (GRPNVGKS), 57 to 61 (DTGGI), 119 to 122 (NKID), 185 to 192 (GRPNVGKS), 232 to 236 (DTAGL), and 297 to 300 (NKWD) each bind GTP. One can recognise a KH-like domain in the interval 353–437 (HEFSTSEVNQ…PVRFIFREGA (85 aa)).

It belongs to the TRAFAC class TrmE-Era-EngA-EngB-Septin-like GTPase superfamily. EngA (Der) GTPase family. In terms of assembly, associates with the 50S ribosomal subunit.

GTPase that plays an essential role in the late steps of ribosome biogenesis. The sequence is that of GTPase Der from Xanthomonas campestris pv. campestris (strain 8004).